We begin with the raw amino-acid sequence, 502 residues long: Cyanidin 3-O-glucoside 5-O-glucosyltransferase (acyl-glucose) (502 aa).

A signal peptide spans 1 to 30; that stretch reads MNMSCKFEIVLLVSWWLLLVLVFGVESSMF. An N-linked (GlcNAc...) asparagine glycan is attached at Asn2. A beta-D-glucoside contacts are provided by residues Gln52, His150, and 196–197; that span reads NE. The active-site Proton donor is Glu197. N-linked (GlcNAc...) asparagine glycosylation occurs at Asn303. Residues Tyr320 and Glu388 each contribute to the a beta-D-glucoside site. The active-site Nucleophile is the Glu388. Asn425 carries an N-linked (GlcNAc...) asparagine glycan. Residues Trp435 and Phe451 each contribute to the a beta-D-glucoside site.

The protein belongs to the glycosyl hydrolase 1 family. As to expression, expressed in petals.

It localises to the vacuole. It carries out the reaction cyanidin 3-O-beta-D-glucoside + 1-O-(trans-sinapoyl)-beta-D-glucose = cyanidin 3,5-di-O-beta-D-glucoside + (E)-sinapate. It functions in the pathway pigment biosynthesis; anthocyanin biosynthesis. Functionally, beta-glycosidase that catalyzes the transfer of glucose moiety to anthocyanidin 3-glucoside at the 5 position. Anthocyanins are ubiquitous colored pigments that are responsible for variations in petal color. Uses acyl-glucoses, but not UDP-glucose, as the glucose donor. In Dianthus caryophyllus (Carnation), this protein is Cyanidin 3-O-glucoside 5-O-glucosyltransferase (acyl-glucose) (AA5GT).